Here is a 178-residue protein sequence, read N- to C-terminus: Large ribosomal subunit protein uL6 (178 aa).

The protein belongs to the universal ribosomal protein uL6 family. As to quaternary structure, part of the 50S ribosomal subunit.

Functionally, this protein binds to the 23S rRNA, and is important in its secondary structure. It is located near the subunit interface in the base of the L7/L12 stalk, and near the tRNA binding site of the peptidyltransferase center. In Campylobacter concisus (strain 13826), this protein is Large ribosomal subunit protein uL6.